The primary structure comprises 404 residues: Cysteine desulfurase IscS (404 aa).

Pyridoxal 5'-phosphate contacts are provided by residues 75-76 (AT), Asn-155, Gln-183, and 203-205 (SAH). Lys-206 is modified (N6-(pyridoxal phosphate)lysine). Thr-243 is a binding site for pyridoxal 5'-phosphate. Residue Cys-328 is the Cysteine persulfide intermediate of the active site. Cys-328 is a binding site for [2Fe-2S] cluster.

Belongs to the class-V pyridoxal-phosphate-dependent aminotransferase family. NifS/IscS subfamily. Homodimer. Forms a heterotetramer with IscU, interacts with other sulfur acceptors. Pyridoxal 5'-phosphate is required as a cofactor.

It is found in the cytoplasm. The catalysed reaction is (sulfur carrier)-H + L-cysteine = (sulfur carrier)-SH + L-alanine. The protein operates within cofactor biosynthesis; iron-sulfur cluster biosynthesis. In terms of biological role, master enzyme that delivers sulfur to a number of partners involved in Fe-S cluster assembly, tRNA modification or cofactor biosynthesis. Catalyzes the removal of elemental sulfur atoms from cysteine to produce alanine. Functions as a sulfur delivery protein for Fe-S cluster synthesis onto IscU, an Fe-S scaffold assembly protein, as well as other S acceptor proteins. This Shewanella piezotolerans (strain WP3 / JCM 13877) protein is Cysteine desulfurase IscS.